A 361-amino-acid chain; its full sequence is RNA 3'-terminal phosphate cyclase (361 aa).

Positions 105, 132, 295, 298, 299, and 321 each coordinate ATP. The active-site Tele-AMP-histidine intermediate is the histidine 321.

It belongs to the RNA 3'-terminal cyclase family. Type 1 subfamily.

The protein resides in the nucleus. The protein localises to the nucleoplasm. The catalysed reaction is a 3'-end 3'-phospho-ribonucleotide-RNA + ATP = a 3'-end 2',3'-cyclophospho-ribonucleotide-RNA + AMP + diphosphate. Functionally, catalyzes the conversion of 3'-phosphate to a 2',3'-cyclic phosphodiester at the end of RNA. The mechanism of action of the enzyme occurs in 3 steps: (A) adenylation of the enzyme by ATP; (B) transfer of adenylate to an RNA-N3'P to produce RNA-N3'PP5'A; (C) and attack of the adjacent 2'-hydroxyl on the 3'-phosphorus in the diester linkage to produce the cyclic end product. Likely functions in some aspects of cellular RNA processing. Function plays an important role in a RNA repair and splicing pathway which controls axon regeneration in response to peripheral (PNS) and central nervous system (CNS) injury. In response to axotomy, negatively regulates splicing of Xbp1 which in turn activates downstream effectors which inhibit axon regeneration, including down-regulating the microtubule regulators ringer and futsch. The protein is RNA 3'-terminal phosphate cyclase of Drosophila melanogaster (Fruit fly).